A 535-amino-acid chain; its full sequence is CTP synthase (535 aa).

Residues 1 to 266 (MKTKFIFITG…DEQVVEKLNI (266 aa)) form an amidoligase domain region. Position 14 (S14) interacts with CTP. S14 contacts UTP. Residues 15–20 (SIGKGL) and D72 contribute to the ATP site. Residues D72 and E140 each coordinate Mg(2+). Residues 147–149 (DIE), 187–192 (KTKPTQ), and K223 each bind CTP. Residues 187 to 192 (KTKPTQ) and K223 each bind UTP. Positions 292 to 534 (RIAIVGKYVN…IGASLTHRNQ (243 aa)) constitute a Glutamine amidotransferase type-1 domain. G354 provides a ligand contact to L-glutamine. C381 serves as the catalytic Nucleophile; for glutamine hydrolysis. L-glutamine-binding positions include 382–385 (LGMQ), E405, and R462. Residues H507 and E509 contribute to the active site.

The protein belongs to the CTP synthase family. Homotetramer.

It carries out the reaction UTP + L-glutamine + ATP + H2O = CTP + L-glutamate + ADP + phosphate + 2 H(+). It catalyses the reaction L-glutamine + H2O = L-glutamate + NH4(+). The enzyme catalyses UTP + NH4(+) + ATP = CTP + ADP + phosphate + 2 H(+). It functions in the pathway pyrimidine metabolism; CTP biosynthesis via de novo pathway; CTP from UDP: step 2/2. Its activity is regulated as follows. Allosterically activated by GTP, when glutamine is the substrate; GTP has no effect on the reaction when ammonia is the substrate. The allosteric effector GTP functions by stabilizing the protein conformation that binds the tetrahedral intermediate(s) formed during glutamine hydrolysis. Inhibited by the product CTP, via allosteric rather than competitive inhibition. Functionally, catalyzes the ATP-dependent amination of UTP to CTP with either L-glutamine or ammonia as the source of nitrogen. Regulates intracellular CTP levels through interactions with the four ribonucleotide triphosphates. In Trichlorobacter lovleyi (strain ATCC BAA-1151 / DSM 17278 / SZ) (Geobacter lovleyi), this protein is CTP synthase.